We begin with the raw amino-acid sequence, 318 residues long: Annexin D6 (318 aa).

Position 2 is an N-acetylalanine (A2). Annexin repeat units lie at residues 11–82, 83–154, 168–239, and 243–314; these read PLPE…LWTL, DPTE…PLVS, KLAR…TAIK, and YPEK…ALLG. 4 residues coordinate Ca(2+): F24, G26, G28, and E68. A Phosphoserine modification is found at S95. 2 positions are modified to phosphothreonine: T100 and T112. Y129 carries the post-translational modification Phosphotyrosine. 3 residues coordinate Ca(2+): I256, R258, and G260. At Y285 the chain carries Phosphotyrosine. The residue at position 290 (S290) is a Phosphoserine. Ca(2+) is bound by residues D300 and T301.

Belongs to the annexin (TC 1.A.31.1) family. As to expression, expressed in flowers.

The chain is Annexin D6 (ANN6) from Arabidopsis thaliana (Mouse-ear cress).